The following is a 143-amino-acid chain: Ribonuclease HI (143 aa).

Positions 1 to 136 (MQEIEIFCDG…CDSLAKLEAQ (136 aa)) constitute an RNase H type-1 domain. The Mg(2+) site is built by Asp-9, Glu-47, Asp-69, and Asp-128.

It belongs to the RNase H family. As to quaternary structure, monomer. Mg(2+) is required as a cofactor.

It localises to the cytoplasm. The catalysed reaction is Endonucleolytic cleavage to 5'-phosphomonoester.. Functionally, endonuclease that specifically degrades the RNA of RNA-DNA hybrids. This chain is Ribonuclease HI (rnhA), found in Helicobacter pylori (strain ATCC 700392 / 26695) (Campylobacter pylori).